Reading from the N-terminus, the 428-residue chain is Gamma-glutamyl phosphate reductase (428 aa).

This sequence belongs to the gamma-glutamyl phosphate reductase family.

The protein localises to the cytoplasm. It carries out the reaction L-glutamate 5-semialdehyde + phosphate + NADP(+) = L-glutamyl 5-phosphate + NADPH + H(+). The protein operates within amino-acid biosynthesis; L-proline biosynthesis; L-glutamate 5-semialdehyde from L-glutamate: step 2/2. Functionally, catalyzes the NADPH-dependent reduction of L-glutamate 5-phosphate into L-glutamate 5-semialdehyde and phosphate. The product spontaneously undergoes cyclization to form 1-pyrroline-5-carboxylate. The chain is Gamma-glutamyl phosphate reductase from Agrobacterium fabrum (strain C58 / ATCC 33970) (Agrobacterium tumefaciens (strain C58)).